Here is a 500-residue protein sequence, read N- to C-terminus: Probable malate:quinone oxidoreductase (500 aa).

The protein belongs to the MQO family. FAD serves as cofactor.

The enzyme catalyses (S)-malate + a quinone = a quinol + oxaloacetate. It participates in carbohydrate metabolism; tricarboxylic acid cycle; oxaloacetate from (S)-malate (quinone route): step 1/1. This Bacillus cereus (strain ZK / E33L) protein is Probable malate:quinone oxidoreductase.